Consider the following 238-residue polypeptide: tRNA (guanine-N(1)-)-methyltransferase (238 aa).

Residues Gly-108 and 127–132 (LGDFVL) contribute to the S-adenosyl-L-methionine site.

The protein belongs to the RNA methyltransferase TrmD family. As to quaternary structure, homodimer.

The protein resides in the cytoplasm. It carries out the reaction guanosine(37) in tRNA + S-adenosyl-L-methionine = N(1)-methylguanosine(37) in tRNA + S-adenosyl-L-homocysteine + H(+). Its function is as follows. Specifically methylates guanosine-37 in various tRNAs. This chain is tRNA (guanine-N(1)-)-methyltransferase, found in Streptococcus uberis (strain ATCC BAA-854 / 0140J).